The chain runs to 1383 residues: MKQLLIFCLLFGSIFHHGDAGCIMRGLCQKHTENAYGPCVTNDTNVEPTAFDKTHPAYEKMVEFCPHLLTGDNKLCCTPSQAEGLTKQIAQARHILGRCPSCFDNFAKLWCEFTCSPNQQDFVSISEMKPIEKKEGFTPEYQPAEAYVNTVEYRLSTDFAEGMFSSCKDVTFGGQPALRVMCTSTPCTLTNWLEFIGTQNLDLNIPIHTKFLLYDPIKTPPSDRSTYMNVNFTGCDKSARVGWPACSTSECNKEEYANLIDLDDGKTSGQTCNVHGIACLNIFVMLAFIGSLAVLLCVGFVFTSYDEDYTNLRQTQSGEESPKRNRIKRTGAWIHNFMENNARDIGMMAGRNPKSHFFIGCAVLIFCLPGMIYHKESTNVVDMWSSPRSRARQEEMVFNANFGRPQRYQQIMLLSHRDFQSSGKLYGPVFHKDIFEELFDILNAIKNISTQDSDGRTITLDDVCYRPMGPGYDCLIMSPTNYFQGNKEHLDMKSNKEETVSEDDDAFDYFSSEATTDEWMNHMAACIDQPMSQKTKSGLSCMGTYGGPSAPNMVFGKNSTNHQAANSIMMTILVTQRTEPEIQKAELWEKEFLKFCKEYREKSPKVIFSFMAERSITDEIENDAKDEIVTVVIALAFLIGYVTFSLGRYFVCENQLWSILVHSRICLGMLSVIINLLSSFCSWGIFSMFGIHPVKNALVVQFFVVTLLGVCRTFMVVKYYAQQRVSMPYMSPDQCPEIVGMVMAGTMPAMFSSSLGCAFSFFIGGFTDLPAIRTFCLYAGLAVLIDVVLHCTIFLALFVWDTQRELNGKPEFFFPYQIKDLLGAYLIGRQRATDTFMTQFFHFQVAPFLMHRMTRIITGIIFIASFITTVILSSKISVGFDQSMAFTEKSYISTHFRYLDKFFDVGPPVFFTVDGELDWHRPDVQNKFCTFPGCSDTSFGNIMNYAVGHTEQTYLSGEMYNWIDNYLEWISRKSPCCKVYVHDPNTFCSTNRNKSALDDKACRTCMDFDYVANSYPKSSIMYHRPSIEVFYRHLRHFLEDTPNSECVFGGRASFKDAISFTSRGRIQASQFMTFHKKLSISNSSDFIKAMDTARMVSRRLERSIDDTAHVFAYSKIFPFYEQYSTIMPILTTQLFITVVGVFGIICVTLGIDVKGAACAVICQVSNYFHIVAFMYIFNIPVNALSATNLVMSSGILIEFSVNVLKGYACSLRQRAKDRAESTVGSIGPIILSGPVVTMAGSTMFLSGAHLQIITVYFFKLFLITIVSSAVHALIILPILLAFGGSRGHGSSETSTNDNDEQHDACVLSPTAESHISNVEEGILNRPSLLDASHILDPLLKAEGGIDKAIDIITIDRSYPSTPSSLPCTSRMPRAHIEPDLRSL.

Residues 1-20 (MKQLLIFCLLFGSIFHHGDA) form the signal peptide. 8 cysteine pairs are disulfide-bonded: cysteine 22–cysteine 76, cysteine 28–cysteine 39, cysteine 65–cysteine 111, cysteine 77–cysteine 115, cysteine 99–cysteine 246, cysteine 102–cysteine 167, cysteine 182–cysteine 187, and cysteine 235–cysteine 251. An N-linked (GlcNAc...) asparagine glycan is attached at asparagine 42. N-linked (GlcNAc...) asparagine glycosylation occurs at asparagine 231. 2 consecutive transmembrane segments (helical) span residues 282–302 (IFVM…GFVF) and 353–373 (PKSH…GMIY). The N-linked (GlcNAc...) asparagine glycan is linked to asparagine 447. Intrachain disulfides connect cysteine 464/cysteine 474 and cysteine 526/cysteine 541. The N-linked (GlcNAc...) asparagine glycan is linked to asparagine 558. Helical transmembrane passes span 627–647 (EIVT…FSLG), 665–685 (ICLG…SWGI), 697–717 (ALVV…FMVV), 746–766 (TMPA…IGGF), 780–800 (GLAV…LFVW), and 856–876 (IITG…SSKI). Positions 627 to 800 (EIVTVVIALA…CTIFLALFVW (174 aa)) constitute an SSD domain. Disulfide bonds link cysteine 929-cysteine 934, cysteine 976-cysteine 1046, cysteine 977-cysteine 1005, and cysteine 988-cysteine 1002. Asparagine 993 and asparagine 1082 each carry an N-linked (GlcNAc...) asparagine glycan. Transmembrane regions (helical) follow at residues 1126–1146 (IMPI…GIIC), 1157–1177 (ACAV…MYIF), 1179–1199 (IPVN…LIEF), 1226–1246 (IGPI…MFLS), and 1260–1280 (LFLI…PILL).

It belongs to the patched family.

It is found in the membrane. The catalysed reaction is cholesterol(in) = cholesterol(out). Its function is as follows. Involved in the uptake or utilization of cholesterol. Ncr-1 and ncr-2 act redundantly to prevent dauer larva formation under favorable growth conditions, and are required for the normal functioning of ADF, ASI and ASG neurons. The chain is NPC intracellular cholesterol transporter 1 homolog 1 from Caenorhabditis elegans.